A 629-amino-acid chain; its full sequence is MGQLSILCLFVTVCASVCGYSWPSDETTTKPSQFKDFHTDPLVVETTSGLVRGYSKTVLGREVHVFTGIPFAKPPIEQLRFKKPVPIDPWHGILDATKQPNSCFQERYEYFPGFEGEEMWNPNTNISEDCLYLNIWVPQRLRIRHHADKPTIDRPKVPVLIWIYGGGYMSGTATLDVYDADIIAATSDVIVASMQYRLGSFGFLYLNRYFPRGSDETPGNMGLWDQILAIRWIKDNAAAFGGDPDLITLFGESAGGGSISIHLISPVTKGLVRRGIMQSGTMNAPWSYMSGERAEQIGKILIQDCGCNVSLLENSPRKVMDCMRAVDAKTISLQQWNSYSGILGFPSTPTIEGVLLPKHPMDMLAEGDYEDMEILLGSNHDEGTYFLLYDFIDFFEKDGPSFLQREKYHDIIDTIFKNMSRLERDAIVFQYTNWEHVHDGYLNQKMIGDVVGDYFFVCPTNNFAEVAADRGMKVFYYYFTHRTSTSLWGEWMGVIHGDEVEYVFGHPLNMSLQFNSRERELSLKIMQAFARFATTGKPVTDDVNWPLYTKDQPQYFIFNADKNGIGKGPRATACAFWNDFLPKLRDNSGSEEAPCVNTYLSKIRSSSNELLPPSTSLVLIWIMTLLNAL.

A signal peptide spans 1–38; the sequence is MGQLSILCLFVTVCASVCGYSWPSDETTTKPSQFKDFH. A disulfide bridge connects residues Cys-103 and Cys-130. N-linked (GlcNAc...) asparagine glycosylation occurs at Asn-125. The active-site Acyl-ester intermediate is Ser-253. Cys-307 and Cys-322 are disulfide-bonded. A glycan (N-linked (GlcNAc...) asparagine) is linked at Asn-308. Glu-382 functions as the Charge relay system in the catalytic mechanism. A glycan (N-linked (GlcNAc...) asparagine) is linked at Asn-418. Cysteines 458 and 574 form a disulfide. The Charge relay system role is filled by His-496. N-linked (GlcNAc...) asparagine glycosylation is present at Asn-509. Ser-605 carries the GPI-anchor amidated serine lipid modification. The propeptide at 606–629 is removed in mature form; it reads SSNELLPPSTSLVLIWIMTLLNAL.

Belongs to the type-B carboxylesterase/lipase family. In terms of assembly, homodimer; disulfide-linked. Post-translationally, the N-terminus is blocked.

It localises to the synapse. It is found in the cell membrane. It catalyses the reaction acetylcholine + H2O = choline + acetate + H(+). Rapidly hydrolyzes choline released into the synapse. This chain is Acetylcholinesterase, found in Leptinotarsa decemlineata (Colorado potato beetle).